The sequence spans 737 residues: Relaxin receptor 2 (737 aa).

At 1 to 399 (MWLLLHVILL…SSSEDLLANG (399 aa)) the chain is on the extracellular side. An LDL-receptor class A domain is found at 27 to 64 (LCPKGYFPCGNLTKCLPRAFHCDGVDDCGNGADEDNCG). 3 disulfide bridges follow: Cys28-Cys41, Cys35-Cys54, and Cys48-Cys63. A glycan (N-linked (GlcNAc...) asparagine) is linked at Asn37. An N-linked (GlcNAc...) asparagine glycan is attached at Asn121. 10 LRR repeats span residues 121–142 (NVTL…VFSR), 145–166 (ELRK…AFLG), 169–190 (NLQI…IFKD), 193–214 (QLAW…SFMG), 217–238 (SLFF…LCAQ), 241–262 (QLNW…TFLT), 265–286 (SLTV…TFSS), 289–310 (NLGE…LFSD), 313–334 (LLQK…QFGS), and 337–358 (QLQS…MFQP). The N-linked (GlcNAc...) asparagine glycan is linked to Asn257. 3 N-linked (GlcNAc...) asparagine glycosylation sites follow: Asn318, Asn350, and Asn361. The helical transmembrane segment at 400-420 (ILRVSVWVIAFITCVGNFLVI) threads the bilayer. Topologically, residues 421-438 (AVRSLIKAENTTHAMSIK) are cytoplasmic. A helical membrane pass occupies residues 439 to 459 (ILCCADCLMGVYLFSVGVFDI). At 460–478 (KYRGQYQKYALLWMESVPC) the chain is on the extracellular side. Residues Cys478 and Cys556 are joined by a disulfide bond. Residues 479–501 (RLLGFLATLSTEVSVLLLTFLTL) form a helical membrane-spanning segment. The Cytoplasmic portion of the chain corresponds to 502–520 (EKFLVIVFPFSNLRLGKRQ). The chain crosses the membrane as a helical span at residues 521-541 (TAVALASIWVVGFLIAAVPFT). At 542-575 (REDYFGNFYGKNGVCFPLHYDQAEDFGSRGYSLG) the chain is on the extracellular side. The chain crosses the membrane as a helical span at residues 576 to 596 (IFLGVNLLAFLVIVISYVTMF). The Cytoplasmic portion of the chain corresponds to 597–622 (CSIHKTALQTAEVRSHIGKEVAVANR). The chain crosses the membrane as a helical span at residues 623 to 643 (FFFIVFSDAICWIPVFVVKIL). Residues 644–653 (SLLQVEIPGT) lie on the Extracellular side of the membrane. A helical membrane pass occupies residues 654–674 (ITSWIVVFFLPVNSALNPILY). Over 675-737 (TLTTSFFKDK…GDSIMKPVSP (63 aa)) the chain is Cytoplasmic.

It belongs to the G-protein coupled receptor 1 family. In terms of tissue distribution, expressed in embryonic and adult gonads of males and females, as well in male gubernarculum. Expressed also in brain. Not detected in kidney, spleen and heart.

It is found in the cell membrane. Receptor for relaxin. The activity of this receptor is mediated by G proteins leading to stimulation of adenylate cyclase and an increase of cAMP. May also be a receptor for Leydig insulin-like peptide (INSL3). The polypeptide is Relaxin receptor 2 (Rxfp2) (Mus musculus (Mouse)).